A 176-amino-acid polypeptide reads, in one-letter code: HTH-type transcriptional regulator DctR (176 aa).

The region spanning 109–174 (VPEAAVSLSR…ELVRHQHIDY (66 aa)) is the HTH luxR-type domain. Positions 133–152 (TEDILEKLKISLKTFYCHKH) form a DNA-binding region, H-T-H motif.

Its function is as follows. May act as a transcriptional regulator of dctA. The protein is HTH-type transcriptional regulator DctR (dctR) of Escherichia coli (strain K12).